A 417-amino-acid chain; its full sequence is Phosphoribosylamine--glycine ligase (417 aa).

Residues 107–313 (KQIMAKYEIP…FLEIIEATLE (207 aa)) form the ATP-grasp domain. 133 to 194 (LKETWYPVVI…EEMLYGKEAS (62 aa)) contacts ATP. Positions 283 and 285 each coordinate Mg(2+).

This sequence belongs to the GARS family. It depends on Mg(2+) as a cofactor. Requires Mn(2+) as cofactor.

The catalysed reaction is 5-phospho-beta-D-ribosylamine + glycine + ATP = N(1)-(5-phospho-beta-D-ribosyl)glycinamide + ADP + phosphate + H(+). Its pathway is purine metabolism; IMP biosynthesis via de novo pathway; N(1)-(5-phospho-D-ribosyl)glycinamide from 5-phospho-alpha-D-ribose 1-diphosphate: step 2/2. This Caldanaerobacter subterraneus subsp. tengcongensis (strain DSM 15242 / JCM 11007 / NBRC 100824 / MB4) (Thermoanaerobacter tengcongensis) protein is Phosphoribosylamine--glycine ligase.